We begin with the raw amino-acid sequence, 198 residues long: Protein uvp1 (198 aa).

One can recognise a Resolvase/invertase-type recombinase catalytic domain in the interval 1–140; that stretch reads MIIGYARKST…SGLAAARARG (140 aa). Catalysis depends on serine 9, which acts as the O-(5'-phospho-DNA)-serine intermediate. Residues 168–187 constitute a DNA-binding region (H-T-H motif); it reads VGAVAKRFNVSRMTIYRYTT.

It belongs to the site-specific recombinase resolvase family.

Functionally, cooperates with the mucAB genes in the DNA repair process. Could be a resolvase-invertase protein. The protein is Protein uvp1 (uvp1) of Escherichia coli.